Consider the following 581-residue polypeptide: Major facilitator superfamily multidrug transporter NAG4 (581 aa).

Residues M1–V14 show a composition bias toward polar residues. Positions M1 to S43 are disordered. N11 is a glycosylation site (N-linked (GlcNAc...) asparagine). The span at D15–Q27 shows a compositional bias: basic and acidic residues. An N-linked (GlcNAc...) asparagine glycan is attached at N125. Helical transmembrane passes span W132 to V152, V169 to F189, K199 to A219, L230 to I250, A261 to L281, W290 to V310, I365 to F385, G403 to F423, L447 to S467, W471 to L491, A510 to I530, and L544 to A564.

The protein belongs to the major facilitator superfamily. DHA1 family. Polyamines/proton antiporter (TC 2.A.1.2.16) subfamily.

The protein localises to the cell membrane. Its function is as follows. MFS transporter involved in N-acetylglucosamine (GlcNAc) uptake. Confers resistance to cycloheximide, 4-nitroquinoline-N-oxide, and 1,10-phenanthroline, and contributes to virulence. The chain is Major facilitator superfamily multidrug transporter NAG4 from Candida albicans (strain SC5314 / ATCC MYA-2876) (Yeast).